The sequence spans 219 residues: Holliday junction branch migration complex subunit RuvA (219 aa).

Residues 1-71 (MISWIKGELV…EDSDMLFGFS (71 aa)) form a domain I region. Residues 72 to 150 (TKDQRDFFIQ…NKEIEKENLN (79 aa)) form a domain II region. Positions 151 to 161 (INNFLEKNKDL) are flexible linker. Residues 161–219 (LDSIFKDIDLTLQSLNYSKKEIKNLFPKLINNIKNSSLEKESISFENLLKEAMNYLDHK) form a domain III region.

It belongs to the RuvA family. As to quaternary structure, homotetramer. Forms an RuvA(8)-RuvB(12)-Holliday junction (HJ) complex. HJ DNA is sandwiched between 2 RuvA tetramers; dsDNA enters through RuvA and exits via RuvB. An RuvB hexamer assembles on each DNA strand where it exits the tetramer. Each RuvB hexamer is contacted by two RuvA subunits (via domain III) on 2 adjacent RuvB subunits; this complex drives branch migration. In the full resolvosome a probable DNA-RuvA(4)-RuvB(12)-RuvC(2) complex forms which resolves the HJ.

The protein localises to the cytoplasm. Its function is as follows. The RuvA-RuvB-RuvC complex processes Holliday junction (HJ) DNA during genetic recombination and DNA repair, while the RuvA-RuvB complex plays an important role in the rescue of blocked DNA replication forks via replication fork reversal (RFR). RuvA specifically binds to HJ cruciform DNA, conferring on it an open structure. The RuvB hexamer acts as an ATP-dependent pump, pulling dsDNA into and through the RuvAB complex. HJ branch migration allows RuvC to scan DNA until it finds its consensus sequence, where it cleaves and resolves the cruciform DNA. The chain is Holliday junction branch migration complex subunit RuvA from Prochlorococcus marinus subsp. pastoris (strain CCMP1986 / NIES-2087 / MED4).